The sequence spans 360 residues: S-adenosylmethionine:tRNA ribosyltransferase-isomerase (360 aa).

This sequence belongs to the QueA family. In terms of assembly, monomer.

It localises to the cytoplasm. The catalysed reaction is 7-aminomethyl-7-carbaguanosine(34) in tRNA + S-adenosyl-L-methionine = epoxyqueuosine(34) in tRNA + adenine + L-methionine + 2 H(+). Its pathway is tRNA modification; tRNA-queuosine biosynthesis. Its function is as follows. Transfers and isomerizes the ribose moiety from AdoMet to the 7-aminomethyl group of 7-deazaguanine (preQ1-tRNA) to give epoxyqueuosine (oQ-tRNA). This Burkholderia pseudomallei (strain K96243) protein is S-adenosylmethionine:tRNA ribosyltransferase-isomerase.